Here is a 462-residue protein sequence, read N- to C-terminus: Violaxanthin de-epoxidase, chloroplastic (462 aa).

A disulfide bridge links cysteine 231 with cysteine 362. Positions 372 to 437 (IEKTVEEGER…RELSKEEMEF (66 aa)) form a coiled coil. The tract at residues 380 to 391 (ERIIVKEVEEIE) is involved in the binding to the thylakoid membrane.

The protein belongs to the calycin superfamily. Lipocalin family. In terms of assembly, interacts in vitro with LTO1.

It localises to the plastid. Its subcellular location is the chloroplast thylakoid membrane. The catalysed reaction is all-trans-violaxanthin + 2 L-ascorbate = all-trans-zeaxanthin + 2 L-dehydroascorbate + 2 H2O. With respect to regulation, activity limited by low ascorbate availability. Feedback inhibition by zeaxanthin. Requires the presence of micelle-forming lipids such as monogalactosyldiacylglyceride (MGDG). Low concentration of bilayer forming lipids, such as digalactosyldiacylglyceride (DGDG) or phosphatidylcholine, supports a slower but nearly complete activity. 80% of the specific activity in lumenal chloroplast fractions is lost in vitro in the presence of reduced thioredoxin. Part of the xanthophyll (or violaxanthin) cycle for controlling the concentration of zeaxanthin in chloroplasts. Catalyzes the two-step mono de-epoxidation reaction. Stereospecific for all-trans xanthophylls. Zeaxanthin induces the dissipation of excitation energy in the chlorophyll of the light-harvesting protein complex of photosystem II. The polypeptide is Violaxanthin de-epoxidase, chloroplastic (Arabidopsis thaliana (Mouse-ear cress)).